A 154-amino-acid chain; its full sequence is Xanthine-guanine phosphoribosyltransferase (154 aa).

5-phospho-alpha-D-ribose 1-diphosphate contacts are provided by residues 37–38, Arg-69, and 88–96; these read RG and EDLVDSGDT. Arg-69 contributes to the GMP binding site. Asp-89 lines the Mg(2+) pocket. Guanine is bound by residues Asp-92 and Ile-135. Residues Asp-92 and Ile-135 each contribute to the xanthine site. GMP is bound by residues 92-96 and 134-135; these read DSGDT and WI.

This sequence belongs to the purine/pyrimidine phosphoribosyltransferase family. XGPT subfamily. As to quaternary structure, homotetramer. Mg(2+) is required as a cofactor.

It localises to the cell inner membrane. It catalyses the reaction GMP + diphosphate = guanine + 5-phospho-alpha-D-ribose 1-diphosphate. The catalysed reaction is XMP + diphosphate = xanthine + 5-phospho-alpha-D-ribose 1-diphosphate. It carries out the reaction IMP + diphosphate = hypoxanthine + 5-phospho-alpha-D-ribose 1-diphosphate. It functions in the pathway purine metabolism; GMP biosynthesis via salvage pathway; GMP from guanine: step 1/1. It participates in purine metabolism; XMP biosynthesis via salvage pathway; XMP from xanthine: step 1/1. Its function is as follows. Purine salvage pathway enzyme that catalyzes the transfer of the ribosyl-5-phosphate group from 5-phospho-alpha-D-ribose 1-diphosphate (PRPP) to the N9 position of the 6-oxopurines guanine and xanthine to form the corresponding ribonucleotides GMP (guanosine 5'-monophosphate) and XMP (xanthosine 5'-monophosphate), with the release of PPi. To a lesser extent, also acts on hypoxanthine. The polypeptide is Xanthine-guanine phosphoribosyltransferase (Vibrio vulnificus (strain CMCP6)).